The primary structure comprises 226 residues: Reticulon-like protein B16 (226 aa).

In terms of domain architecture, Reticulon spans alanine 41 to lysine 224. Helical transmembrane passes span leucine 54 to phenylalanine 74, leucine 75 to valine 95, and valine 149 to leucine 169.

The protein resides in the endoplasmic reticulum membrane. This chain is Reticulon-like protein B16 (RTNLB16), found in Arabidopsis thaliana (Mouse-ear cress).